The primary structure comprises 545 residues: Ribulokinase (545 aa).

The protein belongs to the ribulokinase family.

The enzyme catalyses D-ribulose + ATP = D-ribulose 5-phosphate + ADP + H(+). It catalyses the reaction L-ribulose + ATP = L-ribulose 5-phosphate + ADP + H(+). The protein operates within carbohydrate degradation; L-arabinose degradation via L-ribulose; D-xylulose 5-phosphate from L-arabinose (bacterial route): step 2/3. The protein is Ribulokinase of Staphylococcus aureus (strain bovine RF122 / ET3-1).